We begin with the raw amino-acid sequence, 110 residues long: uncharacterized protein (110 aa).

Disordered stretches follow at residues 1–41 (MEWG…ERAQ) and 65–110 (LRQL…ASES). The stretch at 38 to 68 (ERAQQLLDAVEQRQRQLLDTIAACEEMLRQL) forms a coiled coil.

This is an uncharacterized protein from Mus musculus (Mouse).